Reading from the N-terminus, the 529-residue chain is Bifunctional purine biosynthesis protein PurH (529 aa).

The region spanning 1–148 is the MGS-like domain; it reads MQQRRPVRRA…KNHKDVAIVV (148 aa). Lys-287 carries the N6-acetyllysine modification.

Belongs to the PurH family.

It catalyses the reaction (6R)-10-formyltetrahydrofolate + 5-amino-1-(5-phospho-beta-D-ribosyl)imidazole-4-carboxamide = 5-formamido-1-(5-phospho-D-ribosyl)imidazole-4-carboxamide + (6S)-5,6,7,8-tetrahydrofolate. The catalysed reaction is IMP + H2O = 5-formamido-1-(5-phospho-D-ribosyl)imidazole-4-carboxamide. It participates in purine metabolism; IMP biosynthesis via de novo pathway; 5-formamido-1-(5-phospho-D-ribosyl)imidazole-4-carboxamide from 5-amino-1-(5-phospho-D-ribosyl)imidazole-4-carboxamide (10-formyl THF route): step 1/1. It functions in the pathway purine metabolism; IMP biosynthesis via de novo pathway; IMP from 5-formamido-1-(5-phospho-D-ribosyl)imidazole-4-carboxamide: step 1/1. This is Bifunctional purine biosynthesis protein PurH from Escherichia coli O9:H4 (strain HS).